Consider the following 361-residue polypeptide: Uroporphyrinogen decarboxylase (361 aa).

Residues 27–31, Asp-77, Tyr-154, Thr-209, and His-327 each bind substrate; that span reads RQAGR.

The protein belongs to the uroporphyrinogen decarboxylase family. In terms of assembly, homodimer.

It is found in the cytoplasm. It carries out the reaction uroporphyrinogen III + 4 H(+) = coproporphyrinogen III + 4 CO2. The protein operates within porphyrin-containing compound metabolism; protoporphyrin-IX biosynthesis; coproporphyrinogen-III from 5-aminolevulinate: step 4/4. In terms of biological role, catalyzes the decarboxylation of four acetate groups of uroporphyrinogen-III to yield coproporphyrinogen-III. The polypeptide is Uroporphyrinogen decarboxylase (Coxiella burnetii (strain RSA 331 / Henzerling II)).